Consider the following 142-residue polypeptide: Autophagy-related protein 31 (142 aa).

The protein resides in the cytoplasm. It localises to the cytoskeleton. It is found in the preautophagosomal structure. Its function is as follows. Plays a role in starvation-induced autophagy. Involved in mitophagy. Functions with ATG17 and ATG29 at the preautophagosomal structure (PAS) in order to form normal autophagosomes under starvation conditions. May be involved in microtubule function, such as chromosome segregation and karyogamy. This chain is Autophagy-related protein 31 (CIS1), found in Eremothecium gossypii (strain ATCC 10895 / CBS 109.51 / FGSC 9923 / NRRL Y-1056) (Yeast).